A 303-amino-acid chain; its full sequence is N-acetyl-D-glucosamine kinase (303 aa).

ATP is bound by residues 4-11 (GFDIGGSK) and 133-140 (GVGGGLIV). Zn(2+)-binding residues include histidine 157, cysteine 177, cysteine 179, and cysteine 184.

The protein belongs to the ROK (NagC/XylR) family. NagK subfamily.

The enzyme catalyses N-acetyl-D-glucosamine + ATP = N-acetyl-D-glucosamine 6-phosphate + ADP + H(+). The protein operates within cell wall biogenesis; peptidoglycan recycling. In terms of biological role, catalyzes the phosphorylation of N-acetyl-D-glucosamine (GlcNAc) derived from cell-wall degradation, yielding GlcNAc-6-P. This is N-acetyl-D-glucosamine kinase from Erwinia tasmaniensis (strain DSM 17950 / CFBP 7177 / CIP 109463 / NCPPB 4357 / Et1/99).